Here is a 198-residue protein sequence, read N- to C-terminus: HTH-type transcriptional repressor DhaR (198 aa).

The HTH tetR-type domain maps to 4–64; sequence TPVRQHLVEK…QVLQEFFSDL (61 aa).

Transcriptional repressor for the dhaA haloalkane dehalogenase gene. This chain is HTH-type transcriptional repressor DhaR (dhaR), found in Mycobacterium sp. (strain GP1).